A 101-amino-acid polypeptide reads, in one-letter code: uncharacterized protein (101 aa).

A helical transmembrane segment spans residues 13–33; the sequence is FISIMCLFSIPLCFSLSIFFF.

It localises to the membrane. This is an uncharacterized protein from Schizosaccharomyces pombe (strain 972 / ATCC 24843) (Fission yeast).